Here is a 413-residue protein sequence, read N- to C-terminus: Serine/threonine-protein kinase ppk27 (413 aa).

Positions 102–403 constitute a Protein kinase domain; it reads WSINTKITST…LKDFNKHGNF (302 aa). ATP-binding positions include 108–116 and lysine 133; that span reads ITSTEQREV. Aspartate 231 serves as the catalytic Proton acceptor.

This sequence belongs to the protein kinase superfamily. Ser/Thr protein kinase family.

Its subcellular location is the cytoplasm. It catalyses the reaction L-seryl-[protein] + ATP = O-phospho-L-seryl-[protein] + ADP + H(+). The catalysed reaction is L-threonyl-[protein] + ATP = O-phospho-L-threonyl-[protein] + ADP + H(+). The protein is Serine/threonine-protein kinase ppk27 (ppk27) of Schizosaccharomyces pombe (strain 972 / ATCC 24843) (Fission yeast).